The following is a 429-amino-acid chain: Enolase (429 aa).

(2R)-2-phosphoglycerate is bound at residue Q162. E204 (proton donor) is an active-site residue. Positions 241, 283, and 310 each coordinate Mg(2+). Residues K335, R364, S365, and K386 each coordinate (2R)-2-phosphoglycerate. The Proton acceptor role is filled by K335.

This sequence belongs to the enolase family. Mg(2+) serves as cofactor.

Its subcellular location is the cytoplasm. The protein resides in the secreted. The protein localises to the cell surface. It carries out the reaction (2R)-2-phosphoglycerate = phosphoenolpyruvate + H2O. Its pathway is carbohydrate degradation; glycolysis; pyruvate from D-glyceraldehyde 3-phosphate: step 4/5. In terms of biological role, catalyzes the reversible conversion of 2-phosphoglycerate (2-PG) into phosphoenolpyruvate (PEP). It is essential for the degradation of carbohydrates via glycolysis. This chain is Enolase, found in Mycobacterium avium (strain 104).